We begin with the raw amino-acid sequence, 156 residues long: MSRRNAAVKRPVLPDPQFNSRLASMMISRLMKHGKKSTAQRILSDAFSLISERTGGNAVELFETAVKNATPLVEVRARRVGGATYQVPMEVRQERGTAMALRWLVTFSRARNGKSMSQKLAGELMDAANETGSAVKKREDTHKMAEANKAFAHYRY.

This sequence belongs to the universal ribosomal protein uS7 family. Part of the 30S ribosomal subunit. Contacts proteins S9 and S11.

Functionally, one of the primary rRNA binding proteins, it binds directly to 16S rRNA where it nucleates assembly of the head domain of the 30S subunit. Is located at the subunit interface close to the decoding center, probably blocks exit of the E-site tRNA. In Prochlorococcus marinus (strain MIT 9301), this protein is Small ribosomal subunit protein uS7.